We begin with the raw amino-acid sequence, 265 residues long: Mlc titration factor A (265 aa).

Zn(2+)-binding residues include His-111, His-148, His-152, and Glu-211.

The protein belongs to the MtfA family. As to quaternary structure, monomer in solution. Interacts with Mlc. The cofactor is Zn(2+).

It localises to the cytoplasm. Its activity is regulated as follows. Association between Mlc and MtfA may induce structural changes that activate the peptidase activity of MtfA while inactivating the DNA-binding ability of Mlc. The aminopeptidase activity is partially inhibited by metal chelators such as EDTA and phenantroline, but not by inhibitors for serine-, aspartyl-, or cysteine-proteases. Involved in the modulation of the activity of the glucose-phosphotransferase system (glucose-PTS). Interacts with the transcriptional repressor Mlc, preventing its interaction with DNA and leading to the modulation of expression of genes regulated by Mlc, including ptsG, which encodes the PTS system glucose-specific EIICB component. Its function is as follows. Shows zinc-dependent metallopeptidase activity. In vitro, can cleave several artificial substrates. The highest activity is observed for L-alanine fused to 4-nitroanilide (L-alanine-pNA). Shows lower activity towards proline-pNA and valine-pNA. The protein is Mlc titration factor A of Klebsiella pneumoniae subsp. pneumoniae (strain ATCC 700721 / MGH 78578).